A 661-amino-acid polypeptide reads, in one-letter code: UvrABC system protein B (661 aa).

Positions 26–413 constitute a Helicase ATP-binding domain; that stretch reads KGIQEGKKHQ…TDEMVEQIIR (388 aa). Residue 39–46 participates in ATP binding; it reads GATGTGKT. The short motif at 92–115 is the Beta-hairpin element; that stretch reads YYDYYQPEAYVPQTDTFIEKDASI. A Helicase C-terminal domain is found at 430–596; that stretch reads QIDDLIGEIQ…TINKEIRDVI (167 aa). In terms of domain architecture, UVR spans 625–660; the sequence is QKVVEQMEHEMKEAAKALDFERAAELRDLLLELKAE.

The protein belongs to the UvrB family. As to quaternary structure, forms a heterotetramer with UvrA during the search for lesions. Interacts with UvrC in an incision complex.

The protein resides in the cytoplasm. Its function is as follows. The UvrABC repair system catalyzes the recognition and processing of DNA lesions. A damage recognition complex composed of 2 UvrA and 2 UvrB subunits scans DNA for abnormalities. Upon binding of the UvrA(2)B(2) complex to a putative damaged site, the DNA wraps around one UvrB monomer. DNA wrap is dependent on ATP binding by UvrB and probably causes local melting of the DNA helix, facilitating insertion of UvrB beta-hairpin between the DNA strands. Then UvrB probes one DNA strand for the presence of a lesion. If a lesion is found the UvrA subunits dissociate and the UvrB-DNA preincision complex is formed. This complex is subsequently bound by UvrC and the second UvrB is released. If no lesion is found, the DNA wraps around the other UvrB subunit that will check the other stand for damage. The sequence is that of UvrABC system protein B from Bacillus subtilis (strain 168).